Consider the following 345-residue polypeptide: Ketol-acid reductoisomerase (NADP(+)) (345 aa).

Residues 2–182 (AKVYHDSSAD…GTTRAGVLET (181 aa)) enclose the KARI N-terminal Rossmann domain. Residues 25–28 (YGSQ), Arg-48, Ser-51, Ser-53, and 83–86 (DTEQ) contribute to the NADP(+) site. The active site involves His-108. NADP(+) is bound at residue Gly-134. Residues 183–328 (TFKEETETDL…AQLRDMMTFL (146 aa)) enclose the KARI C-terminal knotted domain. Asp-191, Glu-195, Glu-227, and Glu-231 together coordinate Mg(2+). Ser-252 is a binding site for substrate.

It belongs to the ketol-acid reductoisomerase family. Mg(2+) is required as a cofactor.

It carries out the reaction (2R)-2,3-dihydroxy-3-methylbutanoate + NADP(+) = (2S)-2-acetolactate + NADPH + H(+). The catalysed reaction is (2R,3R)-2,3-dihydroxy-3-methylpentanoate + NADP(+) = (S)-2-ethyl-2-hydroxy-3-oxobutanoate + NADPH + H(+). Its pathway is amino-acid biosynthesis; L-isoleucine biosynthesis; L-isoleucine from 2-oxobutanoate: step 2/4. It functions in the pathway amino-acid biosynthesis; L-valine biosynthesis; L-valine from pyruvate: step 2/4. Involved in the biosynthesis of branched-chain amino acids (BCAA). Catalyzes an alkyl-migration followed by a ketol-acid reduction of (S)-2-acetolactate (S2AL) to yield (R)-2,3-dihydroxy-isovalerate. In the isomerase reaction, S2AL is rearranged via a Mg-dependent methyl migration to produce 3-hydroxy-3-methyl-2-ketobutyrate (HMKB). In the reductase reaction, this 2-ketoacid undergoes a metal-dependent reduction by NADPH to yield (R)-2,3-dihydroxy-isovalerate. This Koribacter versatilis (strain Ellin345) protein is Ketol-acid reductoisomerase (NADP(+)).